The following is a 456-amino-acid chain: Adenylosuccinate synthetase isozyme 2 (456 aa).

The span at 1–14 (MSISESSPAATSLP) shows a compositional bias: polar residues. The tract at residues 1 to 24 (MSISESSPAATSLPNGDCGRPRAR) is disordered. GTP contacts are provided by residues 39-45 (GDEGKGK) and 67-69 (GHT). Asp40 serves as the catalytic Proton acceptor. Mg(2+) is bound by residues Asp40 and Gly67. Residue Asp40 coordinates substrate. IMP is bound by residues 40-43 (DEGK), 65-68 (NAGH), Thr162, Arg176, Asn255, Thr270, and Arg334. The Proton donor role is filled by His68. 330 to 336 (VTTGRKR) serves as a coordination point for substrate. Residues Arg336, 362-364 (KLD), and 444-447 (GVGK) each bind GTP.

It belongs to the adenylosuccinate synthetase family. As to quaternary structure, homodimer. It depends on Mg(2+) as a cofactor.

It is found in the cytoplasm. It localises to the mitochondrion. The enzyme catalyses IMP + L-aspartate + GTP = N(6)-(1,2-dicarboxyethyl)-AMP + GDP + phosphate + 2 H(+). It participates in purine metabolism; AMP biosynthesis via de novo pathway; AMP from IMP: step 1/2. With respect to regulation, inhibited competitively by AMP and IMP and non-competitively by fructose 1,6-bisphosphate. Plays an important role in the de novo pathway and in the salvage pathway of purine nucleotide biosynthesis. Catalyzes the first committed step in the biosynthesis of AMP from IMP. The sequence is that of Adenylosuccinate synthetase isozyme 2 (Adss2) from Mus musculus (Mouse).